Reading from the N-terminus, the 221-residue chain is FMN-dependent NADH:quinone oxidoreductase 1 (221 aa).

FMN is bound by residues 17 to 19 and 148 to 151; these read SAS and SSGG.

This sequence belongs to the azoreductase type 1 family. In terms of assembly, homodimer. The cofactor is FMN.

It catalyses the reaction 2 a quinone + NADH + H(+) = 2 a 1,4-benzosemiquinone + NAD(+). The enzyme catalyses N,N-dimethyl-1,4-phenylenediamine + anthranilate + 2 NAD(+) = 2-(4-dimethylaminophenyl)diazenylbenzoate + 2 NADH + 2 H(+). Functionally, quinone reductase that provides resistance to thiol-specific stress caused by electrophilic quinones. In terms of biological role, also exhibits azoreductase activity. Catalyzes the reductive cleavage of the azo bond in aromatic azo compounds to the corresponding amines. This Clostridium acetobutylicum (strain ATCC 824 / DSM 792 / JCM 1419 / IAM 19013 / LMG 5710 / NBRC 13948 / NRRL B-527 / VKM B-1787 / 2291 / W) protein is FMN-dependent NADH:quinone oxidoreductase 1.